We begin with the raw amino-acid sequence, 85 residues long: Small ribosomal subunit protein eS21 (85 aa).

This sequence belongs to the eukaryotic ribosomal protein eS21 family. Component of the 40S small ribosomal subunit.

It localises to the cytoplasm. The protein localises to the cytosol. The protein resides in the rough endoplasmic reticulum. The protein is Small ribosomal subunit protein eS21 (RPS21) of Branchiostoma belcheri (Amphioxus).